A 501-amino-acid chain; its full sequence is Glycerol kinase (501 aa).

T12 serves as a coordination point for ADP. Residues T12, T13, and S14 each contribute to the ATP site. T12 serves as a coordination point for sn-glycerol 3-phosphate. R16 serves as a coordination point for ADP. The sn-glycerol 3-phosphate site is built by R82, E83, Y134, and D244. Residues R82, E83, Y134, D244, and Q245 each coordinate glycerol. ADP-binding residues include T266 and G310. ATP-binding residues include T266, G310, Q314, and G411. ADP-binding residues include G411 and N415.

Belongs to the FGGY kinase family.

It carries out the reaction glycerol + ATP = sn-glycerol 3-phosphate + ADP + H(+). Its pathway is polyol metabolism; glycerol degradation via glycerol kinase pathway; sn-glycerol 3-phosphate from glycerol: step 1/1. With respect to regulation, inhibited by fructose 1,6-bisphosphate (FBP). In terms of biological role, key enzyme in the regulation of glycerol uptake and metabolism. Catalyzes the phosphorylation of glycerol to yield sn-glycerol 3-phosphate. The protein is Glycerol kinase of Methylorubrum extorquens (strain PA1) (Methylobacterium extorquens).